The primary structure comprises 597 residues: Adenine deaminase (597 aa).

Belongs to the metallo-dependent hydrolases superfamily. Adenine deaminase family. Mn(2+) serves as cofactor.

It carries out the reaction adenine + H2O + H(+) = hypoxanthine + NH4(+). In Paracoccus denitrificans (strain Pd 1222), this protein is Adenine deaminase.